The chain runs to 62 residues: Photosystem II reaction center protein Z (62 aa).

2 consecutive transmembrane segments (helical) span residues 8–28 (AIFALIATSSILLISVPVVFA) and 41–61 (FSGTSLWIGLVFLVGILNSLI).

This sequence belongs to the PsbZ family. PSII is composed of 1 copy each of membrane proteins PsbA, PsbB, PsbC, PsbD, PsbE, PsbF, PsbH, PsbI, PsbJ, PsbK, PsbL, PsbM, PsbT, PsbY, PsbZ, Psb30/Ycf12, at least 3 peripheral proteins of the oxygen-evolving complex and a large number of cofactors. It forms dimeric complexes.

The protein resides in the plastid. The protein localises to the chloroplast thylakoid membrane. Functionally, may control the interaction of photosystem II (PSII) cores with the light-harvesting antenna, regulates electron flow through the 2 photosystem reaction centers. PSII is a light-driven water plastoquinone oxidoreductase, using light energy to abstract electrons from H(2)O, generating a proton gradient subsequently used for ATP formation. This chain is Photosystem II reaction center protein Z, found in Acorus gramineus (Dwarf sweet flag).